A 121-amino-acid polypeptide reads, in one-letter code: Small ribosomal subunit protein uS13 (121 aa).

The segment at 91-121 is disordered; the sequence is HRRGLPVRGQKTKNNARTRKGPVKTVANKKK.

This sequence belongs to the universal ribosomal protein uS13 family. As to quaternary structure, part of the 30S ribosomal subunit. Forms a loose heterodimer with protein S19. Forms two bridges to the 50S subunit in the 70S ribosome.

In terms of biological role, located at the top of the head of the 30S subunit, it contacts several helices of the 16S rRNA. In the 70S ribosome it contacts the 23S rRNA (bridge B1a) and protein L5 of the 50S subunit (bridge B1b), connecting the 2 subunits; these bridges are implicated in subunit movement. Contacts the tRNAs in the A and P-sites. This chain is Small ribosomal subunit protein uS13, found in Staphylococcus carnosus (strain TM300).